The following is a 340-amino-acid chain: 4-hydroxy-2-oxovalerate aldolase (340 aa).

The 251-residue stretch at Ile-5–Met-255 folds into the Pyruvate carboxyltransferase domain. Arg-13–Asp-14 serves as a coordination point for substrate. Asp-14 serves as a coordination point for Mn(2+). His-17 functions as the Proton acceptor in the catalytic mechanism. Residues Ser-167 and His-194 each coordinate substrate. Mn(2+)-binding residues include His-194 and His-196. Tyr-285 contacts substrate.

Belongs to the 4-hydroxy-2-oxovalerate aldolase family.

The enzyme catalyses (S)-4-hydroxy-2-oxopentanoate = acetaldehyde + pyruvate. The sequence is that of 4-hydroxy-2-oxovalerate aldolase from Brevibacillus brevis (strain 47 / JCM 6285 / NBRC 100599).